The chain runs to 207 residues: MARCKS-related protein 1-B (207 aa).

2 stretches are compositionally biased toward low complexity: residues 1 to 25 and 63 to 77; these read MGSQ…AAVK and AGAG…AAEG. The disordered stretch occupies residues 1 to 207; it reads MGSQASKGGV…STPAPSEQKE (207 aa). Gly2 carries the N-myristoyl glycine lipid modification. Over residues 78-90 the composition is skewed to basic and acidic residues; that stretch reads EAAKPEGEATKET. Positions 93-116 are effector domain involved in lipid-binding; that stretch reads KKKKKFSLKNSFKFKGISLKKSKK. Residues 100 to 109 are compositionally biased toward low complexity; that stretch reads LKNSFKFKGI. Basic and acidic residues-rich tracts occupy residues 131–154 and 163–182; these read TEEK…KAEE and PKAE…KEEA. Positions 195 to 207 are enriched in polar residues; that stretch reads ETNSTPAPSEQKE.

This sequence belongs to the MARCKS family. As to expression, strongly expressed in brain and eye. Also detected at lower levels in muscle.

Its subcellular location is the cytoplasm. The protein localises to the cytoskeleton. The protein resides in the cell membrane. Involved in the control of cell movement by regulating actin cytoskeleton homeostasis and filopodium and lamellipodium formation. The protein is MARCKS-related protein 1-B of Danio rerio (Zebrafish).